A 120-amino-acid polypeptide reads, in one-letter code: C-type natriuretic peptide 4 (120 aa).

The signal sequence occupies residues 1–22 (MNLSYLVACGLMITLLSVRMGA). Positions 23-96 (KPLSQAQQKS…PRRHKTGIKK (74 aa)) are excised as a propeptide. A disulfide bridge links C104 with C120.

The protein belongs to the natriuretic peptide family.

It is found in the secreted. In terms of biological role, exhibits natriuretic and vasodepressant activity. Has cGMP-stimulating activity. May help to regulate body fluid homeostasis in a variety of aquatic environments. This is C-type natriuretic peptide 4 from Takifugu rubripes (Japanese pufferfish).